The primary structure comprises 387 residues: Acetate kinase (387 aa).

N14 contacts Mg(2+). Position 21 (K21) interacts with ATP. R80 serves as a coordination point for substrate. D137 (proton donor/acceptor) is an active-site residue. Residues 197–201, 271–273, and 319–323 each bind ATP; these read HLGNG, DFR, and GIGEN. E373 is a binding site for Mg(2+).

It belongs to the acetokinase family. Homodimer. Requires Mg(2+) as cofactor. Mn(2+) is required as a cofactor.

It is found in the cytoplasm. The catalysed reaction is acetate + ATP = acetyl phosphate + ADP. The protein operates within metabolic intermediate biosynthesis; acetyl-CoA biosynthesis; acetyl-CoA from acetate: step 1/2. Catalyzes the formation of acetyl phosphate from acetate and ATP. Can also catalyze the reverse reaction. The polypeptide is Acetate kinase (Mycobacterium avium (strain 104)).